The sequence spans 197 residues: Imidazoleglycerol-phosphate dehydratase (197 aa).

It belongs to the imidazoleglycerol-phosphate dehydratase family.

It is found in the cytoplasm. The catalysed reaction is D-erythro-1-(imidazol-4-yl)glycerol 3-phosphate = 3-(imidazol-4-yl)-2-oxopropyl phosphate + H2O. It functions in the pathway amino-acid biosynthesis; L-histidine biosynthesis; L-histidine from 5-phospho-alpha-D-ribose 1-diphosphate: step 6/9. This Nitrosococcus oceani (strain ATCC 19707 / BCRC 17464 / JCM 30415 / NCIMB 11848 / C-107) protein is Imidazoleglycerol-phosphate dehydratase.